A 401-amino-acid chain; its full sequence is NAD(P)H-quinone oxidoreductase subunit H, chloroplastic (401 aa).

Belongs to the complex I 49 kDa subunit family. NDH is composed of at least 16 different subunits, 5 of which are encoded in the nucleus.

Its subcellular location is the plastid. The protein resides in the chloroplast thylakoid membrane. It carries out the reaction a plastoquinone + NADH + (n+1) H(+)(in) = a plastoquinol + NAD(+) + n H(+)(out). The enzyme catalyses a plastoquinone + NADPH + (n+1) H(+)(in) = a plastoquinol + NADP(+) + n H(+)(out). In terms of biological role, NDH shuttles electrons from NAD(P)H:plastoquinone, via FMN and iron-sulfur (Fe-S) centers, to quinones in the photosynthetic chain and possibly in a chloroplast respiratory chain. The immediate electron acceptor for the enzyme in this species is believed to be plastoquinone. Couples the redox reaction to proton translocation, and thus conserves the redox energy in a proton gradient. In Aethionema cordifolium (Lebanon stonecress), this protein is NAD(P)H-quinone oxidoreductase subunit H, chloroplastic.